The chain runs to 476 residues: MKDTFVEKVDDFVRQHDVLKERSTIVVGVSGGPDSLALLYYLLEKRAAKQFEIVVAHVDHMFRGDESHEDLQFVQDLCKGLGVICETIRINVSQYQKQYGMNAQVAARECRYAFLERIMKKYDARYVALGHHGDDQVETILMRLVRGSTPKGYAGIAVKRPFHNGYLIRPLLGVTKEEIVNYCNELKIIPRIDPSNKKEVYTRNRLRKYVLPHLKEENPQVHEKFQKFSMQMQEDEAYLQELAFEKMNKVITKKSDKQISLSIPTFESMSMPLQRRGIQLILNYLYEYKIPSSLSSIHIDKVIEFFKRTQPSGSLDFPGDLKIVRAYEECSFGFKQEIVSPFLQDLSVPGTITLSNGDKLVTEVSEDIPSDMNETVFVAKYNDISYPIRIRSRENGDRMSIQGMNGTKKIKAIFIEAKVPREKREEWPVVCDASGNIIWLPLLKRSAFAISKETAKKDKYMIIHYKSKESSGRIMK.

30-35 lines the ATP pocket; it reads SGGPDS.

Belongs to the tRNA(Ile)-lysidine synthase family.

The protein resides in the cytoplasm. The catalysed reaction is cytidine(34) in tRNA(Ile2) + L-lysine + ATP = lysidine(34) in tRNA(Ile2) + AMP + diphosphate + H(+). Ligates lysine onto the cytidine present at position 34 of the AUA codon-specific tRNA(Ile) that contains the anticodon CAU, in an ATP-dependent manner. Cytidine is converted to lysidine, thus changing the amino acid specificity of the tRNA from methionine to isoleucine. This is tRNA(Ile)-lysidine synthase from Bacillus anthracis.